Consider the following 194-residue polypeptide: dCTP deaminase (194 aa).

DCTP is bound by residues 110–115 (RSSLAR), D128, 136–138 (VLE), Y171, K178, and Q182. Catalysis depends on E138, which acts as the Proton donor/acceptor. Residues 169–194 (RPYNKRDNAKYKDQTSAVGSRISGEN) form a disordered region. Over residues 170–181 (PYNKRDNAKYKD) the composition is skewed to basic and acidic residues. Residues 182 to 194 (QTSAVGSRISGEN) are compositionally biased toward polar residues.

It belongs to the dCTP deaminase family. As to quaternary structure, homotrimer.

The enzyme catalyses dCTP + H2O + H(+) = dUTP + NH4(+). It functions in the pathway pyrimidine metabolism; dUMP biosynthesis; dUMP from dCTP (dUTP route): step 1/2. Its function is as follows. Catalyzes the deamination of dCTP to dUTP. The polypeptide is dCTP deaminase (Marinomonas sp. (strain MWYL1)).